Consider the following 154-residue polypeptide: Small ribosomal subunit protein uS15 (154 aa).

Positions 1 to 10 (MARMHSRRRG) are enriched in basic residues. Positions 1-32 (MARMHSRRRGSSGSDRPTADEPPEWSEVDEDA) are disordered. Over residues 21 to 32 (EPPEWSEVDEDA) the composition is skewed to acidic residues.

The protein belongs to the universal ribosomal protein uS15 family. In terms of assembly, part of the 30S ribosomal subunit.

The polypeptide is Small ribosomal subunit protein uS15 (Natronomonas pharaonis (strain ATCC 35678 / DSM 2160 / CIP 103997 / JCM 8858 / NBRC 14720 / NCIMB 2260 / Gabara) (Halobacterium pharaonis)).